The chain runs to 54 residues: Conotoxin vc5c (54 aa).

Positions 1–14 (VILLLLIASIPSDA) are cleaved as a signal peptide. The propeptide occupies 15–43 (VQLKTKDDMPLASFHGNARRTLQMLSNKR). E50 is subject to 4-carboxyglutamate. W51 bears the 6'-bromotryptophan mark.

Belongs to the conotoxin T superfamily. Post-translationally, contains 2 disulfide bonds that can be either 'C1-C3, C2-C4' or 'C1-C4, C2-C3', since these disulfide connectivities have been observed for conotoxins with cysteine framework V (for examples, see AC P0DQQ7 and AC P81755). In terms of tissue distribution, expressed by the venom duct.

The protein localises to the secreted. This is Conotoxin vc5c from Conus victoriae (Queen Victoria cone).